The chain runs to 254 residues: Imidazole glycerol phosphate synthase subunit HisF (254 aa).

Catalysis depends on residues Asp11 and Asp130.

It belongs to the HisA/HisF family. As to quaternary structure, heterodimer of HisH and HisF.

It is found in the cytoplasm. The catalysed reaction is 5-[(5-phospho-1-deoxy-D-ribulos-1-ylimino)methylamino]-1-(5-phospho-beta-D-ribosyl)imidazole-4-carboxamide + L-glutamine = D-erythro-1-(imidazol-4-yl)glycerol 3-phosphate + 5-amino-1-(5-phospho-beta-D-ribosyl)imidazole-4-carboxamide + L-glutamate + H(+). It functions in the pathway amino-acid biosynthesis; L-histidine biosynthesis; L-histidine from 5-phospho-alpha-D-ribose 1-diphosphate: step 5/9. IGPS catalyzes the conversion of PRFAR and glutamine to IGP, AICAR and glutamate. The HisF subunit catalyzes the cyclization activity that produces IGP and AICAR from PRFAR using the ammonia provided by the HisH subunit. This is Imidazole glycerol phosphate synthase subunit HisF from Oceanobacillus iheyensis (strain DSM 14371 / CIP 107618 / JCM 11309 / KCTC 3954 / HTE831).